Reading from the N-terminus, the 289-residue chain is E3 ubiquitin-protein ligase MARCHF8 (289 aa).

The tract at residues 1 to 68 (MNMPLHQISA…SAPVSSFPRT (68 aa)) is disordered. A compositionally biased stretch (basic and acidic residues) spans 25–39 (KTKEKEREEQNEKTL). Positions 50–64 (SKAGGSSVASAPVSS) are enriched in low complexity. The segment at 70 to 131 (VTPSNQDICR…ELCKYEFIME (62 aa)) adopts an RING-CH-type zinc-finger fold. The Zn(2+) site is built by cysteine 78, cysteine 81, cysteine 95, cysteine 97, histidine 105, cysteine 108, cysteine 121, and cysteine 124. Transmembrane regions (helical) follow at residues 155–175 (CSVT…YVLI) and 195–215 (FWTK…FMYV).

Interacts with CD86.

Its subcellular location is the golgi apparatus membrane. The protein localises to the endoplasmic reticulum membrane. It is found in the cytoplasmic vesicle membrane. It localises to the lysosome membrane. The protein resides in the early endosome membrane. It carries out the reaction S-ubiquitinyl-[E2 ubiquitin-conjugating enzyme]-L-cysteine + [acceptor protein]-L-lysine = [E2 ubiquitin-conjugating enzyme]-L-cysteine + N(6)-ubiquitinyl-[acceptor protein]-L-lysine.. It participates in protein modification; protein ubiquitination. In terms of biological role, E3 ubiquitin-protein ligase that plays several important roles in innate immunity and adaptive immunity. Mediates ubiquitination of CD86 and MHC class II proteins, such as HLA-DR alpha and beta, and promotes their subsequent endocytosis and sorting to lysosomes via multivesicular bodies. Possesses a very broad antiviral activity by specifically inactivating different viral fusion proteins. Targets and ubiquitinates cytoplasmic lysine residues of viral envelope glycoproteins with single transmembrane domains leading to their lysosomal degradation. Mediates the regulation of constitutive ubiquitination and trafficking of the viral restriction factor BST2 within the endocytic pathway. Plays a role in maintenance of immune tolerance to self by promoting the turnover and proteasomal degradation of PD-L1/CD274 via ubiquitination. Catalyzes the 'Lys-63'-linked polyubiquitylation of cGAS thereby inhibiting its DNA binding ability and impairing its antiviral innate immunity. Negatively regulates IL7-mediated T-cell homeostasis by mediating 'Lys-27'-linked polyubiquitination of IL7R, leading to its lysosomal degradation. The protein is E3 ubiquitin-protein ligase MARCHF8 (MARCHF8) of Bos taurus (Bovine).